Here is a 111-residue protein sequence, read N- to C-terminus: Putative pterin-4-alpha-carbinolamine dehydratase (111 aa).

It belongs to the pterin-4-alpha-carbinolamine dehydratase family.

It carries out the reaction (4aS,6R)-4a-hydroxy-L-erythro-5,6,7,8-tetrahydrobiopterin = (6R)-L-erythro-6,7-dihydrobiopterin + H2O. The protein is Putative pterin-4-alpha-carbinolamine dehydratase of Marinobacter nauticus (strain ATCC 700491 / DSM 11845 / VT8) (Marinobacter aquaeolei).